A 1080-amino-acid polypeptide reads, in one-letter code: Phycobiliprotein ApcE (1080 aa).

The tract at residues 18 to 76 (QTLAVATITQAEQQDRFLGTGELNELATYFASGAKRLEIAQTLTENSEIIVSRAANRIF) is phycobilin-like 1. The interval 77 to 144 (VGGSPMSFLE…GPTPPGFRPI (68 aa)) is phycobilin-like loop. A phycobilin-like 2 region spans residues 145–237 (NVARYGPSNM…YMDVLLTEFK (93 aa)). Cys-195 contributes to the (2R,3E)-phycocyanobilin binding site. PBS-linker domains lie at 252–432 (DQQG…FRKV), 514–693 (LGPK…QKQE), 710–888 (PDIQ…KQND), and 922–1080 (STSA…SLGN). Residues 906-930 (GTSSSGRNGFTDLGRSSTSAQGQLG) are disordered.

Belongs to the phycobilisome linker protein family. In terms of assembly, phycobilisomes of this organism are composed of a two cylinder core, from which six rods radiate. The core is mainly composed of allophycocyanin alpha and beta chains, and of three minor components: the allophycocyanin alpha-B chain, a 18.3 kDa polypeptide, and the anchor polypeptide L-CM. In terms of processing, contains one covalently linked bilin chromophore. This protein autochromophorylates.

It localises to the cellular thylakoid membrane. In terms of biological role, this protein is postulated to act both as terminal energy acceptor (by its phycobilin-like domains) and as a linker polypeptide (by its repeats and arms) that stabilizes the phycobilisome core architecture. Functionally, has intrinsic bilin lyase activity. The chain is Phycobiliprotein ApcE (apcE) from Microchaete diplosiphon (Fremyella diplosiphon).